A 3117-amino-acid chain; its full sequence is Centrosome-associated protein 350 (3117 aa).

Residues 1–24 (MRSSKSKEVPLPNPRNSQSKDTVQ) are disordered. A compositionally biased stretch (polar residues) spans 14–24 (PRNSQSKDTVQ). Phosphoserine is present on residues Ser86, Ser139, Ser142, and Ser218. 4 disordered regions span residues 249–275 (PKALRLTDSSPSSTSTSNSQRLDILKR), 436–514 (ILGP…NKQE), 548–625 (TVEL…TEQK), and 671–722 (LEEP…PPQP). Residues 255–267 (TDSSPSSTSTSNS) show a composition bias toward low complexity. Over residues 469-501 (GRAESDPRLDVLHRHLQRNSERSRSKSRSENNI) the composition is skewed to basic and acidic residues. Residues Ser473 and Ser507 each carry the phosphoserine modification. Basic residues predominate over residues 563–573 (PRSHSPVKRKP). Composition is skewed to basic and acidic residues over residues 591–625 (YDTDEVRQYIVRQQEERKRKQNEEKKAQKEATEQK) and 694–703 (ESDKENKVQE). Residues 598–645 (QYIVRQQEERKRKQNEEKKAQKEATEQKNKRLQELYRKQKEAFTKVKN) are a coiled coil. At Ser695 the chain carries Phosphoserine. The segment covering 705–718 (PPSASSSSDMSLSE) has biased composition (low complexity). Position 878 is a phosphothreonine (Thr878). Ser939 bears the Phosphoserine mark. The segment covering 981–992 (SVSEGPLLSEGS) has biased composition (low complexity). The interval 981–1002 (SVSEGPLLSEGSLSEEEGDQDG) is disordered. Ser1061 bears the Phosphoserine mark. Residues 1081–1298 (EDKLDRGTST…GFKPNAPLTD (218 aa)) form a disordered region. Residues 1087 to 1102 (GTSTSRPLNATATPLS) show a composition bias toward polar residues. The span at 1135–1144 (QEDHSNRKSA) shows a compositional bias: basic and acidic residues. 2 stretches are compositionally biased toward low complexity: residues 1153-1172 (TSQHSSGAQSAASSRSSTSS) and 1251-1267 (QKTPTSPLSPSSQKSLQ). Thr1253 is subject to Phosphothreonine. A phosphoserine mark is found at Ser1256 and Ser1259. Residues 1272–1283 (GTSSERSKSSVM) show a composition bias toward polar residues. Residues 1369–1411 (IKAQQQRHERDLALLKLKAEQEALESQRQLEETRNKAAQVHAE) are a coiled coil. 2 disordered regions span residues 1494–1674 (TRTE…GGQD) and 1794–1854 (KLKS…SRMD). The span at 1503-1512 (PSVSLSQSKE) shows a compositional bias: polar residues. 2 stretches are compositionally biased toward low complexity: residues 1522–1535 (YSASYDSYSESSGY) and 1543–1556 (SSGSSRQESPSVPS). Over residues 1558-1571 (KENEKKLNGEKIES) the composition is skewed to basic and acidic residues. Position 1613 is a phosphoserine (Ser1613). Basic and acidic residues predominate over residues 1631-1647 (ESHRRFNMEKRRGHHDD). Ser1648 and Ser1653 each carry phosphoserine. Positions 1707–1800 (KALKEKTKAE…LQEKLKSAGE (94 aa)) form a coiled coil. The span at 1794–1815 (KLKSAGESKLDSHSDDDTKDNK) shows a compositional bias: basic and acidic residues. At Ser1818 the chain carries Phosphoserine. Residues 1827-1841 (RSPSPISISSSETSS) show a composition bias toward low complexity. The stretch at 1856 to 1899 (KFLTKREQKLMQRRQHAEELLEWKRRLDAEEAEIRQMEKQALAA) forms a coiled coil. Residues 1903–1925 (ELIKPKTPKKELEDQRTEQKEIA) show a composition bias toward basic and acidic residues. Disordered regions lie at residues 1903–2020 (ELIK…QCHL), 2107–2221 (ELSQ…ESGD), 2329–2356 (LKERQSDQDMNHSPNIQSGKDIHEQKNT), and 2407–2432 (KDSQSCRDKPQPMRSSTSGATSFGSN). At Ser1936 the chain carries Phosphoserine. Residues 1983-2005 (ELESSTSPSKHSLPKSCTSVSKQ) are compositionally biased toward polar residues. Positions 2051-2110 (EGRIRALKDELRKRKSVVNQLKKEQKKRQKERLKAQEASLIKQLESYDEFIKKTEAELSQ) form a coiled coil. A compositionally biased stretch (polar residues) spans 2111–2129 (DLETSPTAKPQIKTLSSAS). Ser2115 is modified (phosphoserine). Positions 2141–2170 (HRSETAKNWKSLTESERSRGSLESIAEHVD) are enriched in basic and acidic residues. Polar residues predominate over residues 2173–2184 (LSGSERSVSERS). Basic and acidic residues predominate over residues 2191–2201 (RVNEWDSRTED). Position 2204 is a phosphothreonine (Thr2204). Ser2206 is subject to Phosphoserine. Composition is skewed to basic and acidic residues over residues 2329–2338 (LKERQSDQDM) and 2407–2417 (KDSQSCRDKPQ). Residues 2419 to 2432 (MRSSTSGATSFGSN) show a composition bias toward polar residues. Residues Ser2431 and Ser2460 each carry the phosphoserine modification. Positions 2465-2478 (MKSKERSDVEHEQQ) are enriched in basic and acidic residues. The segment at 2465–2485 (MKSKERSDVEHEQQVTESPSL) is disordered. The CAP-Gly domain maps to 2517–2559 (GETSFAKGFWAGVELDKPEGNNNGTYDGIAYFECKEKHGIFAP). A Phosphothreonine modification is found at Thr2689. Residues 2719-2752 (LLDLLTREKNQLEAQLKSSLNEEKKSKQQLEKIS) are a coiled coil. Ser2830 and Ser2839 each carry phosphoserine.

In terms of assembly, part of a ternary complex that contains CEP350, CEP43 and MAPRE1. Interacts (via C-terminus) directly with CEP43 (via N-terminus). Interacts with NR1H3, PPARA, PPARD and PPARG. Interacts directly with microtubules. Interacts with the fusion protein CEP43-FGFR1, and by doing so recruits and activates PI3K and PLC-gamma. Interacts with CYLD. Interacts with CFAP157. Interacts with CEP19 (via C-terminus). Interacts with CEP78; promoting CEP78 localization to centrosome and centriole. Post-translationally, phosphorylated during mitosis. As to expression, detected in heart, brain, skeletal muscle, testis, placenta, lung, liver, kidney and pancreas.

It localises to the cytoplasm. It is found in the cytoskeleton. The protein localises to the microtubule organizing center. Its subcellular location is the centrosome. The protein resides in the spindle. It localises to the nucleus. It is found in the centriole. The protein localises to the cilium basal body. Its function is as follows. Plays an essential role in centriole growth by stabilizing a procentriolar seed composed of at least, SASS6 and CPAP. Required for anchoring microtubules to the centrosomes and for the integrity of the microtubule network. Recruits PPARA to discrete subcellular compartments and thereby modulates PPARA activity. Required for ciliation. The protein is Centrosome-associated protein 350 of Homo sapiens (Human).